Consider the following 84-residue polypeptide: MAITKNMLVVLLLTIIFVTSSVHCSDSALGIGIKEDWEVCFSIDPCLTGEGTLGCTKWCRNHINLSLVGYCRTDPEHCCCVAEK.

The N-terminal stretch at 1–24 (MAITKNMLVVLLLTIIFVTSSVHC) is a signal peptide. 4 disulfide bridges follow: cysteine 40–cysteine 80, cysteine 46–cysteine 71, cysteine 55–cysteine 78, and cysteine 59–cysteine 79.

The protein belongs to the DEFL family.

The protein localises to the secreted. The protein is Defensin-like protein 116 of Arabidopsis thaliana (Mouse-ear cress).